The chain runs to 297 residues: Cytidine deaminase (297 aa).

CMP/dCMP-type deaminase domains follow at residues 50–170 and 189–297; these read SDKE…FGPK and ETES…YASL. 91–93 is a substrate binding site; it reads NME. H104 is a Zn(2+) binding site. The Proton donor role is filled by E106. Zn(2+) is bound by residues C131 and C134.

It belongs to the cytidine and deoxycytidylate deaminase family. In terms of assembly, homodimer. It depends on Zn(2+) as a cofactor.

It catalyses the reaction cytidine + H2O + H(+) = uridine + NH4(+). The catalysed reaction is 2'-deoxycytidine + H2O + H(+) = 2'-deoxyuridine + NH4(+). This enzyme scavenges exogenous and endogenous cytidine and 2'-deoxycytidine for UMP synthesis. In Aliivibrio fischeri (strain ATCC 700601 / ES114) (Vibrio fischeri), this protein is Cytidine deaminase.